The primary structure comprises 40 residues: Trypsin inhibitor (40 aa).

In terms of assembly, monomer.

The enzyme catalyses Preferential cleavage: Arg-|-Xaa, Lys-|-Xaa.. Its function is as follows. Inhibits trypsin but not chymotrypsin, papain or porcine pancreatic alpha-amylase. Has insecticidal activity against A.aegypti. Functions by inhibiting the A.aegypti midgut proteases to reduce the survival of larva and adults. In Cassia leiandra (Marimari), this protein is Trypsin inhibitor.